Consider the following 207-residue polypeptide: N-(5'-phosphoribosyl)anthranilate isomerase (207 aa).

This sequence belongs to the TrpF family.

It catalyses the reaction N-(5-phospho-beta-D-ribosyl)anthranilate = 1-(2-carboxyphenylamino)-1-deoxy-D-ribulose 5-phosphate. It participates in amino-acid biosynthesis; L-tryptophan biosynthesis; L-tryptophan from chorismate: step 3/5. The sequence is that of N-(5'-phosphoribosyl)anthranilate isomerase from Legionella pneumophila (strain Corby).